Reading from the N-terminus, the 412-residue chain is Argininosuccinate synthase (412 aa).

Residues 12-20 and Ala-39 contribute to the ATP site; that span reads AYSGGLDTS. L-citrulline contacts are provided by Tyr-91 and Ser-96. Gly-121 contributes to the ATP binding site. Thr-123, Asn-127, and Asp-128 together coordinate L-aspartate. Asn-127 is a binding site for L-citrulline. Positions 131, 180, 189, 265, and 277 each coordinate L-citrulline.

Belongs to the argininosuccinate synthase family. Type 1 subfamily. As to quaternary structure, homotetramer.

The protein localises to the cytoplasm. It carries out the reaction L-citrulline + L-aspartate + ATP = 2-(N(omega)-L-arginino)succinate + AMP + diphosphate + H(+). It participates in amino-acid biosynthesis; L-arginine biosynthesis; L-arginine from L-ornithine and carbamoyl phosphate: step 2/3. The chain is Argininosuccinate synthase from Pseudoalteromonas atlantica (strain T6c / ATCC BAA-1087).